Reading from the N-terminus, the 283-residue chain is 2-dehydro-3-deoxyphosphooctonate aldolase (283 aa).

Belongs to the KdsA family.

The protein localises to the cytoplasm. It catalyses the reaction D-arabinose 5-phosphate + phosphoenolpyruvate + H2O = 3-deoxy-alpha-D-manno-2-octulosonate-8-phosphate + phosphate. It participates in carbohydrate biosynthesis; 3-deoxy-D-manno-octulosonate biosynthesis; 3-deoxy-D-manno-octulosonate from D-ribulose 5-phosphate: step 2/3. The protein operates within bacterial outer membrane biogenesis; lipopolysaccharide biosynthesis. The protein is 2-dehydro-3-deoxyphosphooctonate aldolase of Vibrio campbellii (strain ATCC BAA-1116).